A 446-amino-acid polypeptide reads, in one-letter code: Calcium-binding and coiled-coil domain-containing protein 2 (446 aa).

A CLIR motif is present at residues 133 to 136; the sequence is ILVV. A coiled-coil region spans residues 137–349; sequence TTQGEVEEIE…RENSRLLSYM (213 aa). The short motif at 203–206 is the LIR-like element; the sequence is DYWE. The interval 362 to 390 is disordered; the sequence is TSDEGGARQNPGLAYGNPYSGIQESSSPS. The interval 371–381 is interaction with LGALS8; that stretch reads NPGLAYGNPYS. Polar residues predominate over residues 381-390; that stretch reads SGIQESSSPS. The interval 395-446 is interaction with MYO6; it reads KKCPICKADDICDHTLEQQQMQPLCFNCPICDKIFPATEKQIFEDHVFCHSL. The segment at 419–444 adopts a UBZ1-type zinc-finger fold; that stretch reads CFNCPICDKIFPATEKQIFEDHVFCH. Zn(2+)-binding residues include Cys-422, Cys-425, His-440, and His-444. The residue at position 445 (Ser-445) is a Phosphoserine.

The protein belongs to the CALCOCO family. As to quaternary structure, dimer. Part of a complex consisting of CALCOCO2, TAX1BP1 and MYO6. Interacts with MYO6. Interacts with GEMIN4. Interacts with ATG8 family members MAP1LC3A, MAP1LC3B, GABARAP, GABARAPL1 and GABARAPL2. Interacts with ATG8 family member MAP1LC3C. Interacts with LGALS8. Interacts with TOM1; the interaction is indirect and is mediated by MYO6, which acts as a bridge between TOM1 and CALCOCO2. Interacts with AZI2. (Microbial infection) Interacts with Lassa virus protein Z. In terms of assembly, (Microbial infection) Interacts with Mopeia virus protein Z. (Microbial infection) Cleaved by S.pyogenes SpeB protease; leading to its degradation. Degradation by SpeB prevents autophagy, promoting to S.pyogenes intracellular replication. As to expression, expressed in all tissues tested with highest expression in skeletal muscle and lowest in brain.

It localises to the cytoplasm. Its subcellular location is the perinuclear region. The protein localises to the cytoskeleton. It is found in the cytoplasmic vesicle. The protein resides in the autophagosome membrane. Xenophagy-specific receptor required for autophagy-mediated intracellular bacteria degradation. Acts as an effector protein of galectin-sensed membrane damage that restricts the proliferation of infecting pathogens such as Salmonella typhimurium upon entry into the cytosol by targeting LGALS8-associated bacteria for autophagy. Initially orchestrates bacteria targeting to autophagosomes and subsequently ensures pathogen degradation by regulating pathogen-containing autophagosome maturation. Bacteria targeting to autophagosomes relies on its interaction with MAP1LC3A, MAP1LC3B and/or GABARAPL2, whereas regulation of pathogen-containing autophagosome maturation requires the interaction with MAP3LC3C. May play a role in ruffle formation and actin cytoskeleton organization and seems to negatively regulate constitutive secretion. The polypeptide is Calcium-binding and coiled-coil domain-containing protein 2 (CALCOCO2) (Homo sapiens (Human)).